Here is a 388-residue protein sequence, read N- to C-terminus: Mannosyl-3-phosphoglycerate synthase (388 aa).

The protein belongs to the glycosyltransferase 2 family.

It localises to the cytoplasm. It carries out the reaction (2R)-3-phosphoglycerate + GDP-alpha-D-mannose = 2-O-(alpha-D-mannosyl)-3-phosphoglycerate + GDP + H(+). It participates in carbohydrate biosynthesis; 2-(alpha-D-mannosyl)-D-glycerate biosynthesis; 2-(alpha-D-mannosyl)-D-glycerate from GDP-alpha-D-mannose (MPG route): step 1/2. In terms of biological role, transfers a mannosyl group from GDP-mannose to phosphoglycerate to form mannosyl-3-phosphoglycerate (MPG). This Aeropyrum pernix (strain ATCC 700893 / DSM 11879 / JCM 9820 / NBRC 100138 / K1) protein is Mannosyl-3-phosphoglycerate synthase (mngA).